The sequence spans 409 residues: DNA primase small subunit (409 aa).

Catalysis depends on residues Glu46, Asp111, and Asp113. The Zinc knuckle motif motif lies at 123–133; the sequence is CCSGAQVCSKC.

Belongs to the eukaryotic-type primase small subunit family. As to quaternary structure, DNA polymerase alpha:primase is a four subunit enzyme complex, which is assembled throughout the cell cycle, and consists of the two DNA polymerase subunits A POL1 and B POL12, and the DNA primase large PRI2 and small PRI1 subunits.

Functionally, DNA primase is the polymerase that synthesizes small RNA primers for the Okazaki fragments made during discontinuous DNA replication. In a complex with DNA polymerase alpha (DNA polymerase alpha:primase) constitutes a replicative polymerase. Both primase components participate in formation of the active center, but the ATP-binding site is exclusively located on p48. The polypeptide is DNA primase small subunit (PRI1) (Saccharomyces cerevisiae (strain ATCC 204508 / S288c) (Baker's yeast)).